Reading from the N-terminus, the 99-residue chain is A-type ATP synthase subunit F (99 aa).

The protein belongs to the V-ATPase F subunit family. Has multiple subunits with at least A(3), B(3), C, D, E, F, H, I and proteolipid K(x).

The protein resides in the cell membrane. Component of the A-type ATP synthase that produces ATP from ADP in the presence of a proton gradient across the membrane. The polypeptide is A-type ATP synthase subunit F (Methanococcus vannielii (strain ATCC 35089 / DSM 1224 / JCM 13029 / OCM 148 / SB)).